A 232-amino-acid chain; its full sequence is U2 small nuclear ribonucleoprotein B'' (232 aa).

Residues 10 to 89 (QTVYLRNLNE…KRMRVQYAKT (80 aa)) enclose the RRM 1 domain. The interval 92-159 (DCLATEDGST…QEPPAPPNNI (68 aa)) is disordered. Basic and acidic residues predominate over residues 108 to 123 (KKQEEKAAEKKRRAEE). Positions 127-151 (SGPNAAAQSNGTGYQASRLGKTSQE) are enriched in polar residues. Residues 158-232 (NILFIQNLPA…NPMAISYAKK (75 aa)) enclose the RRM 2 domain.

It belongs to the RRM U1 A/B'' family. As to quaternary structure, component of the spliceosome where it is associated with snRNP U2.

The protein resides in the nucleus. It localises to the cajal body. It is found in the nucleoplasm. Its subcellular location is the cytoplasm. Involved in nuclear pre-mRNA splicing. This chain is U2 small nuclear ribonucleoprotein B'', found in Oryza sativa subsp. indica (Rice).